A 343-amino-acid chain; its full sequence is Cytoplasmic tRNA 2-thiolation protein 1 (343 aa).

The protein belongs to the TtcA family. CTU1/NCS6/ATPBD3 subfamily.

The protein localises to the cytoplasm. Its pathway is tRNA modification; 5-methoxycarbonylmethyl-2-thiouridine-tRNA biosynthesis. Its function is as follows. Plays a central role in 2-thiolation of mcm(5)S(2)U at tRNA wobble positions of tRNA(Lys), tRNA(Glu) and tRNA(Gln). Directly binds tRNAs and probably acts by catalyzing adenylation of tRNAs, an intermediate required for 2-thiolation. It is unclear whether it acts as a sulfurtransferase that transfers sulfur from thiocarboxylated URM1 onto the uridine of tRNAs at wobble position. The chain is Cytoplasmic tRNA 2-thiolation protein 1 from Drosophila melanogaster (Fruit fly).